A 379-amino-acid polypeptide reads, in one-letter code: Putative acetyl-CoA C-acetyltransferase VraB (379 aa).

Cys86 acts as the Acyl-thioester intermediate in catalysis. The Proton acceptor role is filled by His338.

Belongs to the thiolase-like superfamily. Thiolase family.

This chain is Putative acetyl-CoA C-acetyltransferase VraB (vraB), found in Staphylococcus aureus (strain MRSA252).